The sequence spans 78 residues: Large ribosomal subunit protein bL28 (78 aa).

Positions 1-31 (MAAHCQVTGAEPGFGHSISHSHRRNKRRFDP) are disordered.

It belongs to the bacterial ribosomal protein bL28 family.

The sequence is that of Large ribosomal subunit protein bL28 from Arthrobacter sp. (strain FB24).